Here is a 405-residue protein sequence, read N- to C-terminus: Potassium channel subfamily K member 18 (405 aa).

A helical transmembrane segment spans residues 43–63 (LPGLCFLCCLVTYALVGAALF). N-linked (GlcNAc...) asparagine glycosylation occurs at N94. Positions 125–151 (FLSALFFCCTVFSTVGYGHMYPVTRLG) form an intramembrane region, pore-forming. 4 residues coordinate K(+): T138, V139, G140, and Y141. Positions 138-143 (TVGYGH) are selectivity filter 1. A helical membrane pass occupies residues 153-173 (FLCMLYALFGIPLMFLVLTDI). The interval 221 to 226 (PQIVID) is interaction with calcineurin. Residues 272–277 (RSNSCP) are interaction with YWHAH. A phosphoserine mark is found at S275 and S287. Residues 304–324 (IPLPVIALVIFAYISCAAAIL) form a helical membrane-spanning segment. An intramembrane region (pore-forming) is located at residues 337 to 351 (FYFCFVTLTTIGFGD). The interval 346-351 (TIGFGD) is selectivity filter 2. A helical membrane pass occupies residues 358 to 378 (HFFLFFSIYIIVGMEILFIAF).

It belongs to the two pore domain potassium channel (TC 1.A.1.8) family. In terms of assembly, homodimer. Heterodimer with KCNK2. Heterodimer with KCNK10. Interacts with calcineurin. Interacts with YWHAH, in a phosphorylation-dependent manner. Phosphorylation of Ser-275 is required for the binding of 14-3-3eta/YWHAH. Calcineurin-mediated dephosphorylation of Ser-287 enhances channel activity. Post-translationally, N-glycosylated.

The protein resides in the cell membrane. It carries out the reaction K(+)(in) = K(+)(out). With respect to regulation, activated by volatile anesthetics, such as isoflurane and inhibited by local anesthetics such as bupivacaine and lidocaine. Inhibited by extracellular acidic pH. Inhibited by Zn(2+) ions. Its function is as follows. K(+) channel that conducts outward and inward rectifying currents at depolarized and hyperpolarized membrane potentials, respectively. The outward rectifying currents are voltage-dependent, coupled to K(+) electrochemical gradient across the membrane, whereas the inward currents can be induced in response to activation of Ca(2+)-mobilizing receptors. Homo- and heterodimerizes to form functional channels with distinct regulatory and gating properties. In trigeminal ganglia sensory neurons, the heterodimers of KCNK18/TRESK and KCNK2/TREK-1 or KCNK10/TREK-2 inhibit neuronal firing and neurogenic inflammation by stabilizing the resting membrane potential at K(+) equilibrium potential as well as by regulating the threshold of action potentials and the spike frequency. In thymocytes, conducts K(+) currents upon T cell receptor (TCR) signaling leading to sustained Ca(2+) influx and NF-kappa-B activation, FOXP3 transcription and positive selection of regulatory T cell (Treg) progenitor subsets. Appears to mediate the analgesics effects of hydroxy-alpha-sanshool, a metabolite naturally present in Schezuan pepper and other Xanthoxylum plants. The protein is Potassium channel subfamily K member 18 (Kcnk18) of Rattus norvegicus (Rat).